The following is a 1466-amino-acid chain: Helicase ARIP4 (1466 aa).

Disordered stretches follow at residues 1–137 (MSDE…ERRK) and 185–235 (DSSS…THVN). Residues 11–49 (PDLDPDVELEDEEEEEEEEEVAVEEHDRDDEEGLLDDTS) show a composition bias toward acidic residues. Residues 72 to 82 (TSTTSSQSEPS) show a composition bias toward low complexity. The segment covering 99–114 (KKRAQKPSHMRRNIRK) has biased composition (basic residues). Residues Lys114 and Lys126 each participate in a glycyl lysine isopeptide (Lys-Gly) (interchain with G-Cter in SUMO2) cross-link. The span at 191–200 (EDEKSSRDEV) shows a compositional bias: basic and acidic residues. Lys271 is covalently cross-linked (Glycyl lysine isopeptide (Lys-Gly) (interchain with G-Cter in SUMO2)). Residues 291–511 (RFKTSSGFGC…WCMVDFVRPD (221 aa)) enclose the Helicase ATP-binding domain. 304-311 (HSMGLGKT) lines the ATP pocket. Positions 462–465 (DEGH) match the DEAH box motif. The LXXLL motif 1 signature appears at 550 to 554 (LHSLL). A disordered region spans residues 649-670 (SAGTSARCPPHGTKVKGEDSAL). Glycyl lysine isopeptide (Lys-Gly) (interchain with G-Cter in SUMO2) cross-links involve residues Lys664, Lys681, Lys758, Lys900, Lys1013, and Lys1017. The Helicase C-terminal domain occupies 727–895 (HLIEESVKLG…RVVDDLNPML (169 aa)). Disordered stretches follow at residues 1026-1045 (QSTP…GVSS) and 1120-1170 (ATGK…VSPD). The span at 1135–1154 (SGSQGPSLASTSNGRHSASS) shows a compositional bias: polar residues. Phosphoserine occurs at positions 1168 and 1171. Disordered regions lie at residues 1184–1212 (VAAA…MDNS) and 1259–1281 (TPSV…APVQ). Position 1259 is a phosphothreonine (Thr1259). The LXXLL motif 2 signature appears at 1328 to 1332 (LSNLL). Residues 1444–1466 (AEVGFSSNDDEDKDDDVIEVTGK) form a disordered region. A compositionally biased stretch (acidic residues) spans 1451-1466 (NDDEDKDDDVIEVTGK).

The protein belongs to the SNF2/RAD54 helicase family. As to quaternary structure, interacts with AR via its N-terminus. Interacts with DYRK1A. Binds DNA and mononucleosomes, but does not seem to form large multiprotein complexes. Sumoylated. In terms of tissue distribution, expressed at relatively low level, with highest expression in testis, liver and kidney. In brain, it is expressed in hippocampal and cerebellar neurons. In testis, it is present at high level in Sertoli cell nuclei. Also present in Leydig cell (at protein level).

It localises to the nucleus. The enzyme catalyses ATP + H2O = ADP + phosphate + H(+). With respect to regulation, enzyme activity is enhanced by dsDNA (double-stranded DNA) and ssDNA (single-stranded DNA). Functionally, DNA helicase that modulates androgen receptor (AR)-dependent transactivation in a promoter-dependent manner. Not able to remodel mononucleosomes in vitro. Acts as an AR-coregulator in Sertoli cells. The sequence is that of Helicase ARIP4 (Rad54l2) from Mus musculus (Mouse).